Reading from the N-terminus, the 338-residue chain is Isopentenyl-diphosphate delta-isomerase (338 aa).

A substrate-binding site is contributed by 13–14; that stretch reads RK. FMN-binding positions include 72-74, Ser-102, and Asn-130; that span reads AMT. Position 102–104 (102–104) interacts with substrate; that stretch reads SQR. Substrate is bound at residue Gln-165. Glu-166 provides a ligand contact to Mg(2+). Residues Lys-197, Thr-227, 274–276, and 295–296 each bind FMN; these read GIR and AR.

It belongs to the IPP isomerase type 2 family. In terms of assembly, homooctamer. Dimer of tetramers. It depends on FMN as a cofactor. NADPH is required as a cofactor. The cofactor is Mg(2+).

It is found in the cytoplasm. It catalyses the reaction isopentenyl diphosphate = dimethylallyl diphosphate. Functionally, involved in the biosynthesis of isoprenoids. Catalyzes the 1,3-allylic rearrangement of the homoallylic substrate isopentenyl (IPP) to its allylic isomer, dimethylallyl diphosphate (DMAPP). This chain is Isopentenyl-diphosphate delta-isomerase, found in Deinococcus radiodurans (strain ATCC 13939 / DSM 20539 / JCM 16871 / CCUG 27074 / LMG 4051 / NBRC 15346 / NCIMB 9279 / VKM B-1422 / R1).